The primary structure comprises 151 residues: uncharacterized protein (151 aa).

The Response regulatory domain maps to 2-133 (KTLIVEDNPK…VFVEAVHYSQ (132 aa)). Aspartate 53 carries the 4-aspartylphosphate modification.

This is an uncharacterized protein from Sinorhizobium fredii (strain NBRC 101917 / NGR234).